The following is a 461-amino-acid chain: Protein IQ-DOMAIN 2 (461 aa).

The interval 1 to 55 (MGKKAKWFSSVKKAFSPDSKKSKQKLAEGQNGVISNPPVVDNVRQSSSSPPPALA) is disordered. The region spanning 114 to 142 (EEAAAILIQTIFRGYLARRALRAMRGLVR) is the IQ domain. The segment at 141-158 (VRLKLLMEGSVVKRQAAN) is calmodulin-binding. The segment at 278-461 (PLESSEKEQS…GVTVTNGAGS (184 aa)) is disordered. The span at 310–345 (LTRNGSTQPNTPSSARGTPRNKNSFFSPPTPSRLNQ) shows a compositional bias: polar residues. The Nuclear localization signal motif lies at 425-432 (KKRLSYPT).

The protein belongs to the IQD family. Binds to multiple calmodulin (CaM) in the presence of Ca(2+) and CaM-like proteins.

The protein resides in the nucleus. Its subcellular location is the cytoplasm. It is found in the cytoskeleton. In terms of biological role, may be involved in cooperative interactions with calmodulins or calmodulin-like proteins. Recruits calmodulin proteins to microtubules, thus being a potential scaffold in cellular signaling and trafficking. May associate with nucleic acids and regulate gene expression at the transcriptional or post-transcriptional level. The polypeptide is Protein IQ-DOMAIN 2 (Arabidopsis thaliana (Mouse-ear cress)).